The chain runs to 186 residues: Bifunctional protein PyrR (186 aa).

Positions V101 to T113 match the PRPP-binding motif.

Belongs to the purine/pyrimidine phosphoribosyltransferase family. PyrR subfamily.

It carries out the reaction UMP + diphosphate = 5-phospho-alpha-D-ribose 1-diphosphate + uracil. Its function is as follows. Regulates the transcription of the pyrimidine nucleotide (pyr) operon in response to exogenous pyrimidines. In terms of biological role, also displays a weak uracil phosphoribosyltransferase activity which is not physiologically significant. The protein is Bifunctional protein PyrR of Syntrophobacter fumaroxidans (strain DSM 10017 / MPOB).